A 628-amino-acid polypeptide reads, in one-letter code: Choline transporter-like protein 2 (628 aa).

The Cytoplasmic segment spans residues 1–31; sequence MSSEDLQDHHEIGNEVIKKKGVYTKKKCQDC. The chain crosses the membrane as a helical span at residues 32–52; the sequence is FFLILFLLFWAGMIVVAAFGV. Topologically, residues 53 to 204 are extracellular; that stretch reads KNGKPDRIVK…EILTDLTNSW (152 aa). 4 N-linked (GlcNAc...) asparagine glycosylation sites follow: Asn82, Asn118, Asn146, and Asn168. The chain crosses the membrane as a helical span at residues 205–225; sequence RYLIYGALIAMGLGLTWIFLL. Arg226 is a topological domain (cytoplasmic). The helical transmembrane segment at 227-247 threads the bilayer; sequence FFAGFITWLTVFAAYACLGLL. The Extracellular portion of the chain corresponds to 248–282; it reads TAQVYFQWQDSKDAYENTIPSQRLVMQEKNILALK. A helical membrane pass occupies residues 283–303; it reads VIFIILCVVCGIFALILLALF. Over 304–319 the chain is Cytoplasmic; the sequence is SRIRIAIRIIKECSRA. The helical transmembrane segment at 320-340 threads the bilayer; it reads IGIMPSIFFFPIFIFLLLCGF. Residues 341 to 381 lie on the Extracellular side of the membrane; it reads TVYWVYIGVYLATAGSPTYDDQYRFTGYEADSKLQKIQIYH. The helical transmembrane segment at 382–402 threads the bilayer; sequence FFGYLWTFAFILALNQTTIAG. The Cytoplasmic portion of the chain corresponds to 403–432; sequence AISSWYWVQDKKDTPFFPVWSSFFRVIRYH. Residues 433–453 form a helical membrane-spanning segment; it reads LGSIALGSLILAIVQFIRWVL. Over 454 to 530 the chain is Extracellular; sequence RFLEKKFKGK…RVAAVNLVSS (77 aa). Residues 531-551 traverse the membrane as a helical segment; that stretch reads FLMFLGRVFITAATVGISLYL. Residues 552 to 559 are Cytoplasmic-facing; that stretch reads LKEHENLS. A helical transmembrane segment spans residues 560–580; the sequence is FYIIPVILIGFIAFAISTGFM. The Extracellular segment spans residues 581–628; that stretch reads SVYDMSIDTMLLCFCEDCERNDGSPERPYYMSKSLRKFVDGKGRSKCC.

The protein belongs to the CTL (choline transporter-like) family.

The protein resides in the cell membrane. The protein localises to the mitochondrion outer membrane. It catalyses the reaction choline(out) + n H(+)(in) = choline(in) + n H(+)(out). The catalysed reaction is ethanolamine(out) + n H(+)(in) = ethanolamine(in) + n H(+)(out). Functionally, choline/H+ antiporter, mainly in mitochodria. Also acts as a low-affinity ethanolamine/H+ antiporter, regulating the supply of extracellular ethanolamine (Etn) for the CDP-Etn pathway, redistribute intracellular Etn and balance the CDP-Cho and CDP-Etn arms of the Kennedy pathway. The chain is Choline transporter-like protein 2 (slc44a2) from Dictyostelium discoideum (Social amoeba).